The primary structure comprises 421 residues: UDP-N-acetylglucosamine 1-carboxyvinyltransferase 1 (421 aa).

22–23 (KN) serves as a coordination point for phosphoenolpyruvate. Arg-95 contributes to the UDP-N-acetyl-alpha-D-glucosamine binding site. Cys-119 acts as the Proton donor in catalysis. The residue at position 119 (Cys-119) is a 2-(S-cysteinyl)pyruvic acid O-phosphothioketal. UDP-N-acetyl-alpha-D-glucosamine-binding positions include 124–128 (RPIEQ), Asp-308, and Val-330.

The protein belongs to the EPSP synthase family. MurA subfamily.

The protein localises to the cytoplasm. The enzyme catalyses phosphoenolpyruvate + UDP-N-acetyl-alpha-D-glucosamine = UDP-N-acetyl-3-O-(1-carboxyvinyl)-alpha-D-glucosamine + phosphate. It participates in cell wall biogenesis; peptidoglycan biosynthesis. In terms of biological role, cell wall formation. Adds enolpyruvyl to UDP-N-acetylglucosamine. This is UDP-N-acetylglucosamine 1-carboxyvinyltransferase 1 from Staphylococcus epidermidis (strain ATCC 35984 / DSM 28319 / BCRC 17069 / CCUG 31568 / BM 3577 / RP62A).